A 185-amino-acid chain; its full sequence is Ribosome-recycling factor (185 aa).

This sequence belongs to the RRF family.

The protein localises to the cytoplasm. In terms of biological role, responsible for the release of ribosomes from messenger RNA at the termination of protein biosynthesis. May increase the efficiency of translation by recycling ribosomes from one round of translation to another. This Shewanella baltica (strain OS185) protein is Ribosome-recycling factor.